The chain runs to 273 residues: Gamma-glutamyl cyclotransferase aclK (273 aa).

It belongs to the class-I pyridoxal-phosphate-dependent aminotransferase family.

The catalysed reaction is an alpha-(gamma-L-glutamyl)-L-amino acid = 5-oxo-L-proline + an L-alpha-amino acid. It functions in the pathway mycotoxin biosynthesis. Functionally, gamma-glutamyl cyclotransferase; part of the gene cluster that mediates the biosynthesis of aspirochlorine (or antibiotic A30641), an unusual halogenated spiro compound with distinctive antifungal properties due to selective inhibition of protein biosynthesis, and which is also active against bacteria, viruses, and murine tumor cells. The non-ribosomal peptide synthetase (NRPS) aclP is responsible the formation of the diketopiperazine (DKP) core from the condensation of 2 phenylalanine residues. One Phe residue is tailored into chlorotyrosine by hydroxylation and chlorination, whereas the second Phe undergoes an unprecedented C-C bond cleavage to be converted into glycine. After formation of the DKP, sulfur is incorporated into the DKP by conjugation with glutathione by aclG, followed by its stepwise degradation to the thiol by aclI, aclJ and aclK, and the dithiol oxidation by aclT. In addition, oxygenases (aclB, aclC, aclL and aclO) and O-methyltransferases (aclM and aclU) act as tailoring enzymes to produce the intermediate dechloroaspirochlorine. Ultimately, chlorination of dechloroaspirochlorine by the halogenase aclH is the last step in the aspirochlorine pathway. The polypeptide is Gamma-glutamyl cyclotransferase aclK (Aspergillus oryzae (strain ATCC 42149 / RIB 40) (Yellow koji mold)).